The sequence spans 312 residues: RNA pseudouridylate synthase domain-containing protein 1 (312 aa).

M1 carries the post-translational modification N-acetylmethionine. Residue D67 is part of the active site. Residues 256-298 (ATPDPDPEDRGPRPGSPSALLPGPGRPPPPPTKPPETEAQRGP) are disordered. Over residues 279-289 (PGRPPPPPTKP) the composition is skewed to pro residues.

This sequence belongs to the pseudouridine synthase RluA family.

In Homo sapiens (Human), this protein is RNA pseudouridylate synthase domain-containing protein 1 (RPUSD1).